The following is a 428-amino-acid chain: L-fucose-proton symporter (428 aa).

Transmembrane regions (helical) follow at residues F10–I30, L51–A71, A78–A98, Y100–L120, F147–L167, I204–A224, E250–V270, I288–L308, E311–I331, C339–L359, A371–I391, and A401–F421.

It belongs to the major facilitator superfamily. FHS transporter (TC 2.A.1.7) family.

The protein resides in the cell inner membrane. The enzyme catalyses L-fucose(in) + H(+)(in) = L-fucose(out) + H(+)(out). Functionally, mediates the uptake of L-fucose across the boundary membrane with the concomitant transport of protons into the cell (symport system). The chain is L-fucose-proton symporter (fucP) from Haemophilus influenzae (strain ATCC 51907 / DSM 11121 / KW20 / Rd).